The sequence spans 1320 residues: Tetratricopeptide repeat protein 21A (1320 aa).

TPR repeat units lie at residues 4–38, 110–143, 146–180, 181–213, 215–247, 334–367, 502–534, 572–605, 728–761, 762–795, 797–828, 837–869, 889–922, 924–956, 957–990, 1028–1061, 1201–1234, 1236–1268, and 1270–1303; these read NDSS…FSND, GTAL…SRGF, AYVL…TKDV, LGLM…SGSF, PALV…DESN, VHVA…DKDG, IDPL…DPAS, PLYH…PALK, PHTS…NPHD, ASLA…NGQD, LCCD…DIVQ, VKCL…QSRI, ASIC…LPTD, KVML…EQNH, ETAS…APDN, PGFN…STWG, EKSW…NKSC, KAYE…SHHA, and PAIG…HPDY.

This sequence belongs to the TTC21 family. As to quaternary structure, interacts with IFT20. Interacts with IFT52. Interacts with IFT140. Interacts with CEP78; regulating IFT20 stability and localization. In terms of tissue distribution, strongly expressed in testis.

Intraflagellar transport (IFT)-associated protein required for spermatogenesis. Required for sperm flagellar formation and intraflagellar transport. This Homo sapiens (Human) protein is Tetratricopeptide repeat protein 21A.